The following is a 164-amino-acid chain: MTVYEGSFTPPARPFRFALVIARFNDLVTEKLLSGCQDCLKRHGIDVDPAGTQVDYIWVPGSFEVPLVTRKLAVSGQYDAIICLGAVIRGQTPHFDFVAGEAAKGIAAIASQTGVPVIFGILTTDTMQQALERAGIKSNHGWGYAMNALEMASLMRAMAPLTEG.

Residues F24, 62–64 (SFE), and 86–88 (AVI) each bind 5-amino-6-(D-ribitylamino)uracil. (2S)-2-hydroxy-3-oxobutyl phosphate is bound at residue 91 to 92 (QT). Residue H94 is the Proton donor of the active site. F119 lines the 5-amino-6-(D-ribitylamino)uracil pocket. R133 contacts (2S)-2-hydroxy-3-oxobutyl phosphate.

Belongs to the DMRL synthase family.

It catalyses the reaction (2S)-2-hydroxy-3-oxobutyl phosphate + 5-amino-6-(D-ribitylamino)uracil = 6,7-dimethyl-8-(1-D-ribityl)lumazine + phosphate + 2 H2O + H(+). Its pathway is cofactor biosynthesis; riboflavin biosynthesis; riboflavin from 2-hydroxy-3-oxobutyl phosphate and 5-amino-6-(D-ribitylamino)uracil: step 1/2. In terms of biological role, catalyzes the formation of 6,7-dimethyl-8-ribityllumazine by condensation of 5-amino-6-(D-ribitylamino)uracil with 3,4-dihydroxy-2-butanone 4-phosphate. This is the penultimate step in the biosynthesis of riboflavin. The protein is 6,7-dimethyl-8-ribityllumazine synthase of Synechocystis sp. (strain ATCC 27184 / PCC 6803 / Kazusa).